Here is a 540-residue protein sequence, read N- to C-terminus: Chaperonin GroEL (540 aa).

Residues 29 to 32, 86 to 90, glycine 413, 476 to 478, and aspartate 492 each bind ATP; these read TLGP, DGTTT, and NAA.

It belongs to the chaperonin (HSP60) family. In terms of assembly, forms a cylinder of 14 subunits composed of two heptameric rings stacked back-to-back. Interacts with the co-chaperonin GroES.

Its subcellular location is the cytoplasm. The enzyme catalyses ATP + H2O + a folded polypeptide = ADP + phosphate + an unfolded polypeptide.. Together with its co-chaperonin GroES, plays an essential role in assisting protein folding. The GroEL-GroES system forms a nano-cage that allows encapsulation of the non-native substrate proteins and provides a physical environment optimized to promote and accelerate protein folding. This is Chaperonin GroEL from Streptococcus gordonii (strain Challis / ATCC 35105 / BCRC 15272 / CH1 / DL1 / V288).